The chain runs to 160 residues: Ubiquitin-like protein 4A (160 aa).

Positions Met1–Lys76 constitute a Ubiquitin-like domain. Lys48 is covalently cross-linked (Glycyl lysine isopeptide (Lys-Gly) (interchain with G-Cter in ubiquitin)). Residues Trp99 to Leu141 form a required and sufficient for interaction with BAG6 region.

Component of the BAG6/BAT3 complex, at least composed of BAG6, UBL4A and GET4/TRC35. Interacts with BAG6; the interaction is direct and required for UBL4A protein stability. Interacts with USP13; may be indirect via BAG6. Post-translationally, polyubiquitinated. Ubiquitination by AMFR and deubiquitination by USP13 may regulate the interaction between the BAG6/BAT complex and SGTA and therefore may regulate client proteins fate.

The protein resides in the cytoplasm. The protein localises to the cytosol. Its subcellular location is the nucleus. As part of a cytosolic protein quality control complex, the BAG6/BAT3 complex, maintains misfolded and hydrophobic patches-containing proteins in a soluble state and participates in their proper delivery to the endoplasmic reticulum or alternatively can promote their sorting to the proteasome where they undergo degradation. The BAG6/BAT3 complex is involved in the post-translational delivery of tail-anchored/type II transmembrane proteins to the endoplasmic reticulum membrane. Recruited to ribosomes, it interacts with the transmembrane region of newly synthesized tail-anchored proteins and together with SGTA and ASNA1 mediates their delivery to the endoplasmic reticulum. Client proteins that cannot be properly delivered to the endoplasmic reticulum are ubiquitinated and sorted to the proteasome. Similarly, the BAG6/BAT3 complex also functions as a sorting platform for proteins of the secretory pathway that are mislocalized to the cytosol either delivering them to the proteasome for degradation or to the endoplasmic reticulum. The BAG6/BAT3 complex also plays a role in the endoplasmic reticulum-associated degradation (ERAD), a quality control mechanism that eliminates unwanted proteins of the endoplasmic reticulum through their retrotranslocation to the cytosol and their targeting to the proteasome. It maintains these retrotranslocated proteins in an unfolded yet soluble state condition in the cytosol to ensure their proper delivery to the proteasome. The chain is Ubiquitin-like protein 4A (UBL4A) from Rhinolophus ferrumequinum (Greater horseshoe bat).